Here is a 326-residue protein sequence, read N- to C-terminus: N-acetyl-gamma-glutamyl-phosphate reductase (326 aa).

Cys-155 is an active-site residue.

This sequence belongs to the NAGSA dehydrogenase family. Type 1 subfamily.

The protein localises to the cytoplasm. It catalyses the reaction N-acetyl-L-glutamate 5-semialdehyde + phosphate + NADP(+) = N-acetyl-L-glutamyl 5-phosphate + NADPH + H(+). Its pathway is amino-acid biosynthesis; L-arginine biosynthesis; N(2)-acetyl-L-ornithine from L-glutamate: step 3/4. In terms of biological role, catalyzes the NADPH-dependent reduction of N-acetyl-5-glutamyl phosphate to yield N-acetyl-L-glutamate 5-semialdehyde. This is N-acetyl-gamma-glutamyl-phosphate reductase from Shewanella baltica (strain OS155 / ATCC BAA-1091).